Reading from the N-terminus, the 146-residue chain is Stress-responsive DNAJB4-interacting membrane protein 1 (146 aa).

A signal peptide spans 1–26; that stretch reads MWPAPCSVGRLLIFFMCSSSGYVVQG. The Extracellular segment spans residues 27 to 66; it reads CGPSPGARTTLGSPLSLWSIKTPSHIFCTRRAINLGFPSP. A helical transmembrane segment spans residues 67–87; that stretch reads PLVQLIFWSLNAGLDLYLCLI. Residues 88–94 lie on the Cytoplasmic side of the membrane; the sequence is SSCGFSQ. Residues 95–115 traverse the membrane as a helical segment; it reads VFWPVEAFCSFSLSFFALALS. Residues 116-146 are Extracellular-facing; sequence HKFVICRLDQHIFSGFTKSLKNLPPCHRTDI.

Homodimer. Interacts with DNAJB4. In terms of tissue distribution, expressed in brain with higher detection in neurons than astrocytes. Decreased expression in Alzheimer brains. Detected at protein level in brain and cervix.

Its subcellular location is the membrane. Its function is as follows. Promotes neuronal cells survival to stress conditions. The sequence is that of Stress-responsive DNAJB4-interacting membrane protein 1 (SDIM1) from Homo sapiens (Human).